The following is a 176-amino-acid chain: Salivary antigen 1 (176 aa).

The first 18 residues, 1-18 (MNYCFLVFLVYLVFAVNG), serve as a signal peptide directing secretion.

The protein localises to the secreted. This is Salivary antigen 1 from Ctenocephalides felis (Cat flea).